The sequence spans 73 residues: Translation initiation factor IF-1 (73 aa).

The S1-like domain occupies 1 to 72 (MAKEDVIEVE…TKGRITYRFI (72 aa)).

Belongs to the IF-1 family. As to quaternary structure, component of the 30S ribosomal translation pre-initiation complex which assembles on the 30S ribosome in the order IF-2 and IF-3, IF-1 and N-formylmethionyl-tRNA(fMet); mRNA recruitment can occur at any time during PIC assembly.

The protein resides in the cytoplasm. Its function is as follows. One of the essential components for the initiation of protein synthesis. Stabilizes the binding of IF-2 and IF-3 on the 30S subunit to which N-formylmethionyl-tRNA(fMet) subsequently binds. Helps modulate mRNA selection, yielding the 30S pre-initiation complex (PIC). Upon addition of the 50S ribosomal subunit IF-1, IF-2 and IF-3 are released leaving the mature 70S translation initiation complex. This chain is Translation initiation factor IF-1, found in Lactobacillus johnsonii (strain CNCM I-12250 / La1 / NCC 533).